A 518-amino-acid chain; its full sequence is Beta-TrCP (518 aa).

Polar residues predominate over residues Met-1–Thr-12. Residues Met-1 to Pro-24 form a disordered region. The segment covering Ser-14–Pro-24 has biased composition (basic and acidic residues). Residues Asp-119 to Leu-157 form the F-box domain. WD repeat units lie at residues Glu-230 to Asp-258, Gly-270 to Asp-298, His-310 to Asp-338, Gly-353 to Asn-381, Gly-393 to Asp-421, Gly-433 to Asp-461, and Glu-482 to Asp-510.

As to quaternary structure, part of a SCF (SKP1-cullin-F-box) ubiquitin-protein ligase complex. Interacts with fbxo5.

Functionally, substrate recognition component of a SCF (SKP1-CUL1-F-box protein) E3 ubiquitin-protein ligase complex which mediates the ubiquitination and subsequent proteasomal degradation of target proteins. Probably recognizes and binds to phosphorylated target proteins. May participate in Wnt signaling. The polypeptide is Beta-TrCP (fbxw1) (Xenopus laevis (African clawed frog)).